The sequence spans 274 residues: Elongation factor Ts (274 aa).

The interval 82-85 (TDFV) is involved in Mg(2+) ion dislocation from EF-Tu.

The protein belongs to the EF-Ts family.

The protein resides in the cytoplasm. Its function is as follows. Associates with the EF-Tu.GDP complex and induces the exchange of GDP to GTP. It remains bound to the aminoacyl-tRNA.EF-Tu.GTP complex up to the GTP hydrolysis stage on the ribosome. This chain is Elongation factor Ts, found in Flavobacterium psychrophilum (strain ATCC 49511 / DSM 21280 / CIP 103535 / JIP02/86).